A 227-amino-acid chain; its full sequence is NAD(P)H-quinone oxidoreductase subunit K, chloroplastic (227 aa).

[4Fe-4S] cluster-binding residues include C43, C44, C108, and C139. Residues 173–192 show a composition bias toward polar residues; that stretch reads RSFTTNHKFQVGRSSHTGNY. The interval 173 to 201 is disordered; it reads RSFTTNHKFQVGRSSHTGNYDQGFLSKPP.

The protein belongs to the complex I 20 kDa subunit family. In terms of assembly, NDH is composed of at least 16 different subunits, 5 of which are encoded in the nucleus. It depends on [4Fe-4S] cluster as a cofactor.

The protein localises to the plastid. The protein resides in the chloroplast thylakoid membrane. The catalysed reaction is a plastoquinone + NADH + (n+1) H(+)(in) = a plastoquinol + NAD(+) + n H(+)(out). The enzyme catalyses a plastoquinone + NADPH + (n+1) H(+)(in) = a plastoquinol + NADP(+) + n H(+)(out). Functionally, NDH shuttles electrons from NAD(P)H:plastoquinone, via FMN and iron-sulfur (Fe-S) centers, to quinones in the photosynthetic chain and possibly in a chloroplast respiratory chain. The immediate electron acceptor for the enzyme in this species is believed to be plastoquinone. Couples the redox reaction to proton translocation, and thus conserves the redox energy in a proton gradient. This chain is NAD(P)H-quinone oxidoreductase subunit K, chloroplastic, found in Trachelium caeruleum (Blue throatwort).